The following is a 239-amino-acid chain: Probable transcriptional regulatory protein Pnuc_0618 (239 aa).

The disordered stretch occupies residues 1–21 (MAGHSKWANIQHRKGRQDEKR).

It belongs to the TACO1 family.

It localises to the cytoplasm. This Polynucleobacter asymbioticus (strain DSM 18221 / CIP 109841 / QLW-P1DMWA-1) (Polynucleobacter necessarius subsp. asymbioticus) protein is Probable transcriptional regulatory protein Pnuc_0618.